The chain runs to 210 residues: Redox-sensing transcriptional repressor Rex (210 aa).

The segment at residues 17–56 is a DNA-binding region (H-T-H motif); sequence KYHRYLNELMKNDVDRISSKELGEKIGFTASQIRQDLNCF. 91–96 lines the NAD(+) pocket; that stretch reads GAGNIG.

The protein belongs to the transcriptional regulatory Rex family. Homodimer.

The protein localises to the cytoplasm. Functionally, modulates transcription in response to changes in cellular NADH/NAD(+) redox state. This Clostridium botulinum (strain Eklund 17B / Type B) protein is Redox-sensing transcriptional repressor Rex.